Reading from the N-terminus, the 389-residue chain is Ecto-ADP-ribosyltransferase 3 (389 aa).

An N-terminal signal peptide occupies residues M1–A26. C43 and C256 are disulfide-bonded. The TR mART core domain occupies Q64 to C251. 2 residues coordinate NAD(+): Y101 and R163. N-linked (GlcNAc...) asparagine glycosylation occurs at N248. 3 consecutive repeat copies span residues G283–H292, S293–H302, and G303–H312. A 3 X 10 AA tandem repeats of [GS]-E-K-N-[QW]-K-L-E-D-H region spans residues G283–H312. Residues M325–S362 form a disordered region. A glycan (O-linked (GalNAc...) threonine) is linked at T346. Residues T346–K356 show a composition bias toward pro residues. The GPI-anchor amidated serine moiety is linked to residue S362. A propeptide spans S363–L389 (removed in mature form).

This sequence belongs to the Arg-specific ADP-ribosyltransferase family. In terms of processing, O-glycosylated with core 1 or possibly core 8 glycans. As to expression, testis specific.

It is found in the cell membrane. It carries out the reaction L-arginyl-[protein] + NAD(+) = N(omega)-(ADP-D-ribosyl)-L-arginyl-[protein] + nicotinamide + H(+). The protein is Ecto-ADP-ribosyltransferase 3 (ART3) of Homo sapiens (Human).